Here is a 246-residue protein sequence, read N- to C-terminus: Probable transcriptional regulatory protein HAPS_0943 (246 aa).

This sequence belongs to the TACO1 family.

It localises to the cytoplasm. This Glaesserella parasuis serovar 5 (strain SH0165) (Haemophilus parasuis) protein is Probable transcriptional regulatory protein HAPS_0943.